The chain runs to 268 residues: NAC transcription factor 29 (268 aa).

Residues 9–161 enclose the NAC domain; that stretch reads LPPGFRFHPT…EWVLCRIYKK (153 aa). Residues 106 to 167 mediate DNA binding; that stretch reads VGVKKALVFY…IYKKRGASKL (62 aa).

As to expression, expressed in senescing leaves, petals and sepals.

The protein resides in the nucleus. Transcription activator that binds to, and transactivates the promoter of the abscisic aldehyde oxidase AAO3. Promotes chlorophyll degradation in leaves by enhancing transcription of AAO3, which leads to increased levels of the senescence-inducing hormone abscisic acid (ABA). Involved in the control of dehydration in senescing leaves. Binds to the DNA sequence 5'-CACGTAAGT-3' of SAG113 promoter. SAG113 acts as a negative regulator of ABA signaling for stomatal closure in leaves, and controls water loss during leaf senescence. Transcription factor of the NAC family involved in senescence. May function in the transition between active cell division and cell expansion. Required for normal seed development and morphology. In Arabidopsis thaliana (Mouse-ear cress), this protein is NAC transcription factor 29 (NAC029).